The following is a 906-amino-acid chain: Protein translocase subunit SecA (906 aa).

Residues glutamine 86, 104-108 (GEGKT), and aspartate 511 each bind ATP. Basic and acidic residues-rich tracts occupy residues 853 to 865 (HESV…RHDE) and 877 to 888 (VRREGPKVKRND). The interval 853-906 (HESVIDNNQRHDEDEQEETPKVQQVRREGPKVKRNDPCPCGSGKKYKQCHGKVE) is disordered. Residues cysteine 890, cysteine 892, cysteine 901, and histidine 902 each contribute to the Zn(2+) site. Over residues 896-906 (KKYKQCHGKVE) the composition is skewed to basic residues.

This sequence belongs to the SecA family. As to quaternary structure, monomer and homodimer. Part of the essential Sec protein translocation apparatus which comprises SecA, SecYEG and auxiliary proteins SecDF-YajC and YidC. Zn(2+) is required as a cofactor.

It localises to the cell inner membrane. Its subcellular location is the cytoplasm. The catalysed reaction is ATP + H2O + cellular proteinSide 1 = ADP + phosphate + cellular proteinSide 2.. Its function is as follows. Part of the Sec protein translocase complex. Interacts with the SecYEG preprotein conducting channel. Has a central role in coupling the hydrolysis of ATP to the transfer of proteins into and across the cell membrane, serving both as a receptor for the preprotein-SecB complex and as an ATP-driven molecular motor driving the stepwise translocation of polypeptide chains across the membrane. The chain is Protein translocase subunit SecA from Francisella tularensis subsp. novicida (strain U112).